The following is a 247-amino-acid chain: UPF0259 membrane protein BUAP5A_271 (247 aa).

A run of 6 helical transmembrane segments spans residues 20–40 (IGAI…IDMF), 85–105 (IMES…LISV), 114–134 (IVSS…LNFL), 137–157 (FIIQ…SIIL), 188–208 (IIGP…MLLA), and 218–238 (LFLI…IYLF).

This sequence belongs to the UPF0259 family.

It is found in the cell membrane. This is UPF0259 membrane protein BUAP5A_271 from Buchnera aphidicola subsp. Acyrthosiphon pisum (strain 5A).